Here is a 49-residue protein sequence, read N- to C-terminus: Large ribosomal subunit protein bL33A (49 aa).

It belongs to the bacterial ribosomal protein bL33 family.

This chain is Large ribosomal subunit protein bL33A, found in Streptococcus pneumoniae (strain Hungary19A-6).